A 76-amino-acid polypeptide reads, in one-letter code: Small ribosomal subunit protein bS18 (76 aa).

It belongs to the bacterial ribosomal protein bS18 family. In terms of assembly, part of the 30S ribosomal subunit. Forms a tight heterodimer with protein bS6.

In terms of biological role, binds as a heterodimer with protein bS6 to the central domain of the 16S rRNA, where it helps stabilize the platform of the 30S subunit. This is Small ribosomal subunit protein bS18 from Aeromonas hydrophila subsp. hydrophila (strain ATCC 7966 / DSM 30187 / BCRC 13018 / CCUG 14551 / JCM 1027 / KCTC 2358 / NCIMB 9240 / NCTC 8049).